Consider the following 351-residue polypeptide: L-threonine 3-dehydrogenase (351 aa).

Cysteine 39 lines the Zn(2+) pocket. Residues threonine 41 and histidine 44 each act as charge relay system in the active site. Residues histidine 64, glutamate 65, cysteine 94, cysteine 97, cysteine 100, and cysteine 108 each coordinate Zn(2+). NAD(+) contacts are provided by residues isoleucine 176, aspartate 196, arginine 201, 271–273 (LGI), and 295–296 (IY).

It belongs to the zinc-containing alcohol dehydrogenase family. In terms of assembly, homotetramer. Zn(2+) serves as cofactor.

Its subcellular location is the cytoplasm. The enzyme catalyses L-threonine + NAD(+) = (2S)-2-amino-3-oxobutanoate + NADH + H(+). It participates in amino-acid degradation; L-threonine degradation via oxydo-reductase pathway; glycine from L-threonine: step 1/2. In terms of biological role, catalyzes the NAD(+)-dependent oxidation of L-threonine to 2-amino-3-ketobutyrate. In Francisella tularensis subsp. tularensis (strain SCHU S4 / Schu 4), this protein is L-threonine 3-dehydrogenase.